Here is a 478-residue protein sequence, read N- to C-terminus: Calcium/calmodulin-dependent protein kinase type II subunit alpha (478 aa).

Tyr-13 is modified (phosphotyrosine). A Protein kinase domain is found at 13 to 271; sequence YQLFEELGKG…AAEALKHPWI (259 aa). ATP is bound by residues 19–27 and Lys-42; that span reads LGKGAFSVV. Residue Asp-135 is the Proton acceptor of the active site. Ser-257 bears the Phosphoserine mark. Position 286 is a phosphothreonine; by autocatalysis (Thr-286). Residues 290–300 form a calmodulin-binding region; that stretch reads LKKFNARRKLK. The tract at residues 310-320 is interaction with BAALC; the sequence is TRNFSGGKSGG. The segment at 314–341 is disordered; that stretch reads SGGKSGGNKKSDGVKESSESTNTTIEDE. Basic and acidic residues predominate over residues 322 to 331; that stretch reads KKSDGVKESS. Ser-330, Ser-331, and Ser-333 each carry phosphoserine. Thr-336 and Thr-337 each carry phosphothreonine. The residue at position 404 (Ser-404) is a Phosphoserine.

This sequence belongs to the protein kinase superfamily. CAMK Ser/Thr protein kinase family. CaMK subfamily. There are 4 genes encoding calcium/calmodulin-dependent protein kinase type II chains: CAMK2A, CAMK2B, CAMK2G and CAMK2D. The corresponding proteins assemble into homo- or heteromultimeric holoenzymes composed of 12 subunits with two hexameric rings stacked one on top of the other. Interacts with BAALC. Interacts with MPDZ. Interacts with SYN1. Interacts with CAMK2N2. Interacts with SYNGAP1. Interacts with SYNPO2. Interacts with SHANK3. Interacts with GRIN2B. Interacts with CACNB2. Interacts with LRRC7. Interacts with GRM5. Interacts with DAGLA (via C-terminal); this interaction is enhanced by autophosphorylation of CAMK2A at Thr-286. Interacts with CAMK2N1; this interaction requires CAMK2A activation by Ca(2+). The cofactor is Mg(2+). In terms of processing, autophosphorylation of Thr-286 following activation by Ca(2+)/calmodulin. Phosphorylation of Thr-286 locks the kinase into an activated state. Palmitoylated. Probably palmitoylated by ZDHHC3 and ZDHHC7.

It localises to the synapse. It is found in the postsynaptic density. Its subcellular location is the cell projection. The protein resides in the dendritic spine. The protein localises to the dendrite. It carries out the reaction L-seryl-[protein] + ATP = O-phospho-L-seryl-[protein] + ADP + H(+). It catalyses the reaction L-threonyl-[protein] + ATP = O-phospho-L-threonyl-[protein] + ADP + H(+). Activated by Ca(2+)/calmodulin. Binding of calmodulin results in conformational change that relieves intrasteric autoinhibition and allows autophosphorylation of Thr-286 which turns the kinase in a constitutively active form and confers to the kinase a Ca(2+)-independent activity. Calcium/calmodulin-dependent protein kinase that functions autonomously after Ca(2+)/calmodulin-binding and autophosphorylation, and is involved in various processes, such as synaptic plasticity, neurotransmitter release and long-term potentiation. Member of the NMDAR signaling complex in excitatory synapses, it regulates NMDAR-dependent potentiation of the AMPAR and therefore excitatory synaptic transmission. Regulates dendritic spine development. Also regulates the migration of developing neurons. Phosphorylates the transcription factor FOXO3 to activate its transcriptional activity. Phosphorylates the transcription factor ETS1 in response to calcium signaling, thereby decreasing ETS1 affinity for DNA. In response to interferon-gamma (IFN-gamma) stimulation, catalyzes phosphorylation of STAT1, stimulating the JAK-STAT signaling pathway. In response to interferon-beta (IFN-beta) stimulation, stimulates the JAK-STAT signaling pathway. Acts as a negative regulator of 2-arachidonoylglycerol (2-AG)-mediated synaptic signaling via modulation of DAGLA activity. This chain is Calcium/calmodulin-dependent protein kinase type II subunit alpha (CAMK2A), found in Pongo abelii (Sumatran orangutan).